A 419-amino-acid polypeptide reads, in one-letter code: UDP-N-acetylglucosamine 1-carboxyvinyltransferase (419 aa).

22-23 (KN) is a phosphoenolpyruvate binding site. UDP-N-acetyl-alpha-D-glucosamine is bound at residue Arg-93. Residue Cys-117 is the Proton donor of the active site. Cys-117 bears the 2-(S-cysteinyl)pyruvic acid O-phosphothioketal mark. 2 residues coordinate UDP-N-acetyl-alpha-D-glucosamine: Asp-306 and Ile-328.

This sequence belongs to the EPSP synthase family. MurA subfamily.

Its subcellular location is the cytoplasm. It carries out the reaction phosphoenolpyruvate + UDP-N-acetyl-alpha-D-glucosamine = UDP-N-acetyl-3-O-(1-carboxyvinyl)-alpha-D-glucosamine + phosphate. It functions in the pathway cell wall biogenesis; peptidoglycan biosynthesis. In terms of biological role, cell wall formation. Adds enolpyruvyl to UDP-N-acetylglucosamine. The sequence is that of UDP-N-acetylglucosamine 1-carboxyvinyltransferase from Magnetococcus marinus (strain ATCC BAA-1437 / JCM 17883 / MC-1).